Consider the following 244-residue polypeptide: Secreted RxLR effector protein RXLR-C05 (244 aa).

The signal sequence occupies residues 1–21 (MRGAFYVATAFLIASSTRTAA). Over residues 37 to 46 (LPVGDSDTKS) the composition is skewed to basic and acidic residues. The interval 37 to 56 (LPVGDSDTKSLPRRSLKGSG) is disordered. Positions 50-68 (RSLKGSGDRLEIPVAEEER) match the RxLR-dEER motif.

This sequence belongs to the RxLR effector family.

It localises to the secreted. The protein resides in the host cytoplasm. It is found in the host nucleus. Functionally, secreted effector that suppresses pattern-triggered immunity (PTI) in plant host. This chain is Secreted RxLR effector protein RXLR-C05, found in Plasmopara halstedii (Downy mildew of sunflower).